The following is a 259-amino-acid chain: Diaminopimelate epimerase (259 aa).

Residues N14, Q42, and N60 each coordinate substrate. The Proton donor role is filled by C69. Substrate-binding positions include 70 to 71 (GN), N151, N184, and 202 to 203 (ER). The active-site Proton acceptor is C211. 212–213 (GS) contacts substrate.

This sequence belongs to the diaminopimelate epimerase family. As to quaternary structure, homodimer.

The protein resides in the cytoplasm. It carries out the reaction (2S,6S)-2,6-diaminopimelate = meso-2,6-diaminopimelate. Its pathway is amino-acid biosynthesis; L-lysine biosynthesis via DAP pathway; DL-2,6-diaminopimelate from LL-2,6-diaminopimelate: step 1/1. In terms of biological role, catalyzes the stereoinversion of LL-2,6-diaminopimelate (L,L-DAP) to meso-diaminopimelate (meso-DAP), a precursor of L-lysine and an essential component of the bacterial peptidoglycan. This Wolbachia sp. subsp. Brugia malayi (strain TRS) protein is Diaminopimelate epimerase.